Consider the following 273-residue polypeptide: 4-hydroxy-tetrahydrodipicolinate reductase (273 aa).

Residues 12-17 (GAGGRM) and Glu-38 each bind NAD(+). Arg-39 lines the NADP(+) pocket. Residues 102-104 (GTT) and 126-129 (AANF) each bind NAD(+). His-159 acts as the Proton donor/acceptor in catalysis. His-160 contacts (S)-2,3,4,5-tetrahydrodipicolinate. Catalysis depends on Lys-163, which acts as the Proton donor. 169–170 (GT) serves as a coordination point for (S)-2,3,4,5-tetrahydrodipicolinate.

The protein belongs to the DapB family. As to quaternary structure, homotetramer.

Its subcellular location is the cytoplasm. The enzyme catalyses (S)-2,3,4,5-tetrahydrodipicolinate + NAD(+) + H2O = (2S,4S)-4-hydroxy-2,3,4,5-tetrahydrodipicolinate + NADH + H(+). It catalyses the reaction (S)-2,3,4,5-tetrahydrodipicolinate + NADP(+) + H2O = (2S,4S)-4-hydroxy-2,3,4,5-tetrahydrodipicolinate + NADPH + H(+). Its pathway is amino-acid biosynthesis; L-lysine biosynthesis via DAP pathway; (S)-tetrahydrodipicolinate from L-aspartate: step 4/4. Catalyzes the conversion of 4-hydroxy-tetrahydrodipicolinate (HTPA) to tetrahydrodipicolinate. This chain is 4-hydroxy-tetrahydrodipicolinate reductase, found in Salmonella choleraesuis (strain SC-B67).